A 303-amino-acid polypeptide reads, in one-letter code: Ribosomal RNA small subunit methyltransferase A (303 aa).

Asn37, Val39, Gly64, Glu85, Asp115, and Asn138 together coordinate S-adenosyl-L-methionine.

The protein belongs to the class I-like SAM-binding methyltransferase superfamily. rRNA adenine N(6)-methyltransferase family. RsmA subfamily.

It localises to the cytoplasm. The catalysed reaction is adenosine(1518)/adenosine(1519) in 16S rRNA + 4 S-adenosyl-L-methionine = N(6)-dimethyladenosine(1518)/N(6)-dimethyladenosine(1519) in 16S rRNA + 4 S-adenosyl-L-homocysteine + 4 H(+). In terms of biological role, specifically dimethylates two adjacent adenosines (A1518 and A1519) in the loop of a conserved hairpin near the 3'-end of 16S rRNA in the 30S particle. May play a critical role in biogenesis of 30S subunits. In Bifidobacterium adolescentis (strain ATCC 15703 / DSM 20083 / NCTC 11814 / E194a), this protein is Ribosomal RNA small subunit methyltransferase A.